Here is a 1297-residue protein sequence, read N- to C-terminus: DNA-directed RNA polymerase subunit beta' (1297 aa).

Cysteine 60, cysteine 62, cysteine 75, and cysteine 78 together coordinate Zn(2+). Mg(2+) contacts are provided by aspartate 535, aspartate 537, and aspartate 539. Zn(2+) is bound by residues cysteine 883, cysteine 961, cysteine 968, and cysteine 971.

The protein belongs to the RNA polymerase beta' chain family. The RNAP catalytic core consists of 2 alpha, 1 beta, 1 beta' and 1 omega subunit. When a sigma factor is associated with the core the holoenzyme is formed, which can initiate transcription. Mg(2+) is required as a cofactor. Zn(2+) serves as cofactor.

The enzyme catalyses RNA(n) + a ribonucleoside 5'-triphosphate = RNA(n+1) + diphosphate. Functionally, DNA-dependent RNA polymerase catalyzes the transcription of DNA into RNA using the four ribonucleoside triphosphates as substrates. The chain is DNA-directed RNA polymerase subunit beta' from Salinispora arenicola (strain CNS-205).